The primary structure comprises 156 residues: 16 kDa phloem protein 1 (156 aa).

The C2 domain occupies 1 to 108 (MAVGILEVSL…LEMGVEKGTA (108 aa)). The Ca(2+) site is built by D20, D26, D78, D80, S83, and D86.

Requires Ca(2+) as cofactor.

In terms of biological role, binds to both sense and antisense RNA. Can also bind sheared DNA and dodecamer DNA with a low affinity. Interacts with mesophyll plasmodesmata to mediate its own cell-to-cell transport and potentiate RNA trafficking. May play a role in plant defense signaling. This Arabidopsis thaliana (Mouse-ear cress) protein is 16 kDa phloem protein 1.